The chain runs to 525 residues: Membrane-bound lytic murein transglycosylase F (525 aa).

An N-terminal signal peptide occupies residues 1–24; it reads MQIRHFNRLKRSVLLFASVLLLSA. The interval 25 to 284 is non-LT domain; sequence CQIESQPKSE…SLEEKYIGHI (260 aa). The interval 286–525 is LT domain; the sequence is AFDYVDTRAF…VDEDLDQEEE (240 aa). The active site involves Glu329. The segment at 506–525 is disordered; the sequence is VSGASDITNEVDEDLDQEEE. Positions 514–525 are enriched in acidic residues; it reads NEVDEDLDQEEE.

It in the N-terminal section; belongs to the bacterial solute-binding protein 3 family. The protein in the C-terminal section; belongs to the transglycosylase Slt family.

It localises to the cell outer membrane. The catalysed reaction is Exolytic cleavage of the (1-&gt;4)-beta-glycosidic linkage between N-acetylmuramic acid (MurNAc) and N-acetylglucosamine (GlcNAc) residues in peptidoglycan, from either the reducing or the non-reducing ends of the peptidoglycan chains, with concomitant formation of a 1,6-anhydrobond in the MurNAc residue.. Its function is as follows. Murein-degrading enzyme that degrades murein glycan strands and insoluble, high-molecular weight murein sacculi, with the concomitant formation of a 1,6-anhydromuramoyl product. Lytic transglycosylases (LTs) play an integral role in the metabolism of the peptidoglycan (PG) sacculus. Their lytic action creates space within the PG sacculus to allow for its expansion as well as for the insertion of various structures such as secretion systems and flagella. This chain is Membrane-bound lytic murein transglycosylase F, found in Vibrio parahaemolyticus serotype O3:K6 (strain RIMD 2210633).